The following is a 153-amino-acid chain: Arginine repressor (153 aa).

The protein belongs to the ArgR family.

It is found in the cytoplasm. Its pathway is amino-acid biosynthesis; L-arginine biosynthesis [regulation]. Regulates arginine biosynthesis genes. The polypeptide is Arginine repressor (Actinobacillus pleuropneumoniae serotype 5b (strain L20)).